The sequence spans 396 residues: OTU domain-containing protein 3 (396 aa).

Residues 1-49 are disordered; that stretch reads MSRKQAAKSRPGSGGRRAEAERKRDERAARRALAKERRNRPDPGGSGCE. Over residues 16–41 the composition is skewed to basic and acidic residues; it reads RRAEAERKRDERAARRALAKERRNRP. The region spanning 64-188 is the OTU domain; the sequence is LKLREVPGDG…GEHYDSVRRI (125 aa). K65 carries the post-translational modification N6-acetyllysine. A cys-loop region spans residues 69 to 75; it reads VPGDGNC. The active site involves D72. C75 serves as the catalytic Nucleophile. An N6-acetyllysine mark is found at K121 and K128. Residues 126–136 form a variable-loop region; that stretch reads LSKPGTFAGND. Residues 176–181 are his-loop; that stretch reads YRYGEH. H181 is a catalytic residue. N6-acetyllysine is present on K219. The region spanning 229–269 is the UBA-like domain; sequence DDVEDAVHKVGSATGCTDFNLIVQNLEAENYNIKSAITALL. Positions 275-381 are disordered; that stretch reads TGNDAEENHE…RDTGRSEADM (107 aa). 3 stretches are compositionally biased toward basic and acidic residues: residues 280–301, 312–331, and 343–379; these read EENH…EAGS, NEGR…ESKA, and QRRE…RSEA. Residue K290 is modified to N6-acetyllysine.

Glucose and fatty acids stimulate CREBBP-dependent acetylation, promoting its nuclear translocation.

It is found in the cytoplasm. It localises to the nucleus. It catalyses the reaction Thiol-dependent hydrolysis of ester, thioester, amide, peptide and isopeptide bonds formed by the C-terminal Gly of ubiquitin (a 76-residue protein attached to proteins as an intracellular targeting signal).. In terms of biological role, deubiquitinating enzyme that hydrolyzes 'Lys-6'- and 'Lys-11'-linked polyubiquitin. Also hydrolyzes heterotypic (mixed and branched) and homotypic chains. Important regulator of energy metabolism. Glucose and fatty acids trigger its nuclear translocation by CBP-dependent acetylation. In the nucleus, deubiquitinates and stabilizes the nuclear receptor PPARD regulating the expression of various genes involved in glucose and lipid metabolism and oxidative phosphorylation. Also acts as a negative regulator of the ribosome quality control (RQC) by mediating deubiquitination of 40S ribosomal proteins RPS10/eS10 and RPS20/uS10, thereby antagonizing ZNF598-mediated 40S ubiquitination. This Mus musculus (Mouse) protein is OTU domain-containing protein 3 (Otud3).